The following is a 213-amino-acid chain: Cytochrome b6 (213 aa).

Residues 30–50 (IFFCLGGLTLLCFIVQCLTGI) traverse the membrane as a helical segment. Cys33 contacts heme c. His84 and His98 together coordinate heme b. Transmembrane regions (helical) follow at residues 88 to 108 (CQLMILLVFLHMLRVYYTGAF), 114 to 134 (LNWVAGCFLLVLSLALAFTGY), and 184 to 204 (LHVMILPAVAIIFLVAHFIMI). Residues His185 and His200 each contribute to the heme b site.

It belongs to the cytochrome b family. PetB subfamily. As to quaternary structure, the subunits of the cytochrome bc complex are a Rieske Fe-S protein (PetC), cytochrome b6 (PetB), subunit IV (PetD), and a diheme cytochrome c (PetX). Heme b serves as cofactor. It depends on heme c as a cofactor.

The protein resides in the cell membrane. Component of the cytochrome bc complex which donates electrons to the photosynthetic reaction center. In Heliomicrobium gestii (Heliobacterium gestii), this protein is Cytochrome b6.